Consider the following 115-residue polypeptide: Procyclic form-specific polypeptide (115 aa).

Positions 1–27 (MAPRSLYLLAVLLFSANLFAGVGFAAA) are cleaved as a signal peptide. The disordered stretch occupies residues 27-97 (AAEGPEDKGL…PEPEPGAATL (71 aa)). Positions 31-52 (PEDKGLTKGGKGKGEKGTKVGA) are enriched in basic and acidic residues. Asn56 carries an N-linked (GlcNAc...) asparagine glycan. 17 tandem repeats follow at residues 59–60 (DP), 61–62 (DP), 63–64 (EP), 65–66 (EP), 67–68 (EP), 69–70 (EP), 71–72 (EP), 73–74 (EP), 75–76 (EP), 77–78 (EP), 79–80 (EP), 81–82 (EP), 83–84 (EP), 85–86 (EP), 87–88 (EP), 89–90 (EP), and 91–92 (EP). Positions 59–92 (DPDPEPEPEPEPEPEPEPEPEPEPEPEPEPEPEP) are 17 X 2 AA tandem repeats of [DE]-P. Residues 60 to 90 (PDPEPEPEPEPEPEPEPEPEPEPEPEPEPEP) show a composition bias toward acidic residues. A lipid anchor (GPI-anchor amidated glycine) is attached at Gly93. The propeptide at 94–115 (AATLKSVALPFAIAAAALVAAF) is removed in mature form.

The protein resides in the cell membrane. Major surface antigen of procyclic forms. In Trypanosoma brucei brucei, this protein is Procyclic form-specific polypeptide (PROA).